The chain runs to 339 residues: Methionine import ATP-binding protein MetN 2 (339 aa).

The region spanning 2–241 (ISFNNVSKVY…PKTKTTQNFV (240 aa)) is the ABC transporter domain. 38–45 (GFSGAGKS) is a binding site for ATP.

This sequence belongs to the ABC transporter superfamily. Methionine importer (TC 3.A.1.24) family. The complex is composed of two ATP-binding proteins (MetN), two transmembrane proteins (MetI) and a solute-binding protein (MetQ).

The protein localises to the cell membrane. The enzyme catalyses L-methionine(out) + ATP + H2O = L-methionine(in) + ADP + phosphate + H(+). The catalysed reaction is D-methionine(out) + ATP + H2O = D-methionine(in) + ADP + phosphate + H(+). In terms of biological role, part of the ABC transporter complex MetNIQ involved in methionine import. Responsible for energy coupling to the transport system. This is Methionine import ATP-binding protein MetN 2 from Bacillus cereus (strain ATCC 10987 / NRS 248).